Reading from the N-terminus, the 480-residue chain is Alpha,alpha-trehalose-phosphate synthase [UDP-forming] 2 (480 aa).

Residues Tyr97 and Asp151 each coordinate D-glucose 6-phosphate. Arg288 and Lys293 together coordinate UDP. Residues Arg288 and Lys293 each contribute to the UDP-alpha-D-glucose site. Arg326 serves as a coordination point for D-glucose 6-phosphate. 387-395 (DGMNLVSFE) contributes to the UDP-alpha-D-glucose binding site. Position 391-395 (391-395 (LVSFE)) interacts with UDP.

This sequence belongs to the glycosyltransferase 20 family.

It carries out the reaction D-glucose 6-phosphate + UDP-alpha-D-glucose = alpha,alpha-trehalose 6-phosphate + UDP + H(+). The protein operates within carbohydrate biosynthesis. Synthase catalytic subunit of the trehalose synthase complex that catalyzes the production of trehalose from glucose-6-phosphate and UDP-alpha-D-glucose in a two step process. This Aspergillus niger protein is Alpha,alpha-trehalose-phosphate synthase [UDP-forming] 2.